Reading from the N-terminus, the 334-residue chain is Proline-serine-threonine phosphatase-interacting protein 2 (334 aa).

The F-BAR domain maps to 4 to 264 (SLFKGNFWST…SLETCSIEKD (261 aa)). A coiled-coil region spans residues 66–163 (GQSEINTLKR…AEQAVHRSAN (98 aa)). Residues 288–322 (YSPQRNAAPPGKTTGPNPARRGPLPVPKRIPDDPD) are disordered. Phosphotyrosine occurs at positions 323 and 329.

In terms of processing, phosphorylated on tyrosine. As to expression, expressed in macrophage-containing tissues, including bone marrow, spleen, liver, kidney, intestine and brain.

Its subcellular location is the cytoplasm. It is found in the membrane. Binds to F-actin. May be involved in regulation of the actin cytoskeleton. This is Proline-serine-threonine phosphatase-interacting protein 2 (Pstpip2) from Mus musculus (Mouse).